We begin with the raw amino-acid sequence, 375 residues long: Succinyl-diaminopimelate desuccinylase (375 aa).

His66 is a binding site for Zn(2+). Asp68 is a catalytic residue. Residue Asp99 participates in Zn(2+) binding. The active-site Proton acceptor is Glu133. The Zn(2+) site is built by Glu134, Glu162, and His348.

It belongs to the peptidase M20A family. DapE subfamily. As to quaternary structure, homodimer. It depends on Zn(2+) as a cofactor. Co(2+) serves as cofactor.

It catalyses the reaction N-succinyl-(2S,6S)-2,6-diaminopimelate + H2O = (2S,6S)-2,6-diaminopimelate + succinate. It functions in the pathway amino-acid biosynthesis; L-lysine biosynthesis via DAP pathway; LL-2,6-diaminopimelate from (S)-tetrahydrodipicolinate (succinylase route): step 3/3. In terms of biological role, catalyzes the hydrolysis of N-succinyl-L,L-diaminopimelic acid (SDAP), forming succinate and LL-2,6-diaminopimelate (DAP), an intermediate involved in the bacterial biosynthesis of lysine and meso-diaminopimelic acid, an essential component of bacterial cell walls. The protein is Succinyl-diaminopimelate desuccinylase of Yersinia pseudotuberculosis serotype O:1b (strain IP 31758).